Consider the following 659-residue polypeptide: uncharacterized protein (659 aa).

The next 16 helical transmembrane spans lie at 24-44 (TTLM…YGLF), 71-91 (FGAS…VMMV), 115-135 (IGWL…DSGV), 157-177 (RAWI…RVII), 183-203 (FVLL…GNAG), 214-234 (AVIV…TAAL), 242-262 (AVLI…AELV), 279-299 (LGLV…WALV), 311-331 (LTAL…VQTA), 365-385 (FDSL…AGFV), 393-413 (TWPV…VFTS), 433-453 (MTLN…TLAL), 490-510 (FILF…DTLV), 517-537 (EFMA…IIGI), 550-570 (IGLL…LMTM), and 596-616 (IGGA…IVAL).

This sequence to M.tuberculosis Rv0102.

The protein localises to the cell membrane. This is an uncharacterized protein from Mycobacterium leprae (strain TN).